A 244-amino-acid polypeptide reads, in one-letter code: Phosphoadenosine 5'-phosphosulfate reductase (244 aa).

Cys239 acts as the Nucleophile; cysteine thiosulfonate intermediate in catalysis.

The protein belongs to the PAPS reductase family. CysH subfamily.

It is found in the cytoplasm. It carries out the reaction [thioredoxin]-disulfide + sulfite + adenosine 3',5'-bisphosphate + 2 H(+) = [thioredoxin]-dithiol + 3'-phosphoadenylyl sulfate. It participates in sulfur metabolism; hydrogen sulfide biosynthesis; sulfite from sulfate: step 3/3. Functionally, catalyzes the formation of sulfite from phosphoadenosine 5'-phosphosulfate (PAPS) using thioredoxin as an electron donor. This Salmonella typhi protein is Phosphoadenosine 5'-phosphosulfate reductase.